The primary structure comprises 319 residues: UPF0761 membrane protein PBPRA3489 (319 aa).

A run of 6 helical transmembrane segments spans residues Leu-50–Leu-70, Val-107–Leu-127, Phe-143–Val-163, Ala-188–Leu-208, Ala-215–Leu-235, and Ala-249–Leu-269.

The protein belongs to the UPF0761 family.

It localises to the cell inner membrane. The chain is UPF0761 membrane protein PBPRA3489 from Photobacterium profundum (strain SS9).